A 265-amino-acid polypeptide reads, in one-letter code: Phosphate import ATP-binding protein PstB (265 aa).

Residues 18 to 260 (ISARDVQVFY…PEDPRTESYI (243 aa)) enclose the ABC transporter domain. 50 to 57 (GPSGCGKS) serves as a coordination point for ATP.

Belongs to the ABC transporter superfamily. Phosphate importer (TC 3.A.1.7) family. In terms of assembly, the complex is composed of two ATP-binding proteins (PstB), two transmembrane proteins (PstC and PstA) and a solute-binding protein (PstS).

The protein resides in the cell inner membrane. It carries out the reaction phosphate(out) + ATP + H2O = ADP + 2 phosphate(in) + H(+). Functionally, part of the ABC transporter complex PstSACB involved in phosphate import. Responsible for energy coupling to the transport system. This Roseobacter denitrificans (strain ATCC 33942 / OCh 114) (Erythrobacter sp. (strain OCh 114)) protein is Phosphate import ATP-binding protein PstB.